A 447-amino-acid chain; its full sequence is tRNA-2-methylthio-N(6)-dimethylallyladenosine synthase (447 aa).

In terms of domain architecture, MTTase N-terminal spans 3–120; sequence KKLYIETHGC…LPEMIDAART (118 aa). [4Fe-4S] cluster contacts are provided by C12, C49, C83, C157, C161, and C164. In terms of domain architecture, Radical SAM core spans 143–375; it reads RVDGPSAFVS…QHRINQYGFE (233 aa). A TRAM domain is found at 378–442; that stretch reads RRMVGTVQRI…PHSLRGTLLD (65 aa).

The protein belongs to the methylthiotransferase family. MiaB subfamily. Monomer. Requires [4Fe-4S] cluster as cofactor.

The protein localises to the cytoplasm. It catalyses the reaction N(6)-dimethylallyladenosine(37) in tRNA + (sulfur carrier)-SH + AH2 + 2 S-adenosyl-L-methionine = 2-methylsulfanyl-N(6)-dimethylallyladenosine(37) in tRNA + (sulfur carrier)-H + 5'-deoxyadenosine + L-methionine + A + S-adenosyl-L-homocysteine + 2 H(+). Catalyzes the methylthiolation of N6-(dimethylallyl)adenosine (i(6)A), leading to the formation of 2-methylthio-N6-(dimethylallyl)adenosine (ms(2)i(6)A) at position 37 in tRNAs that read codons beginning with uridine. This Ectopseudomonas mendocina (strain ymp) (Pseudomonas mendocina) protein is tRNA-2-methylthio-N(6)-dimethylallyladenosine synthase.